A 203-amino-acid polypeptide reads, in one-letter code: Holliday junction branch migration complex subunit RuvA (203 aa).

The domain I stretch occupies residues 1-61 (MIIYKYGKIM…EYTKVTYGFD (61 aa)). Positions 62 to 139 (NFKELVIFED…KFMKKLTSDE (78 aa)) are domain II. The interval 140–147 (AAKIKVPA) is flexible linker. A domain III region spans residues 147–203 (ASSENENKFLDTMKMLGFKQQQIKFALDKIELNDDIETCVENAIKLISQQQHETSRV).

This sequence belongs to the RuvA family. Homotetramer. Forms an RuvA(8)-RuvB(12)-Holliday junction (HJ) complex. HJ DNA is sandwiched between 2 RuvA tetramers; dsDNA enters through RuvA and exits via RuvB. An RuvB hexamer assembles on each DNA strand where it exits the tetramer. Each RuvB hexamer is contacted by two RuvA subunits (via domain III) on 2 adjacent RuvB subunits; this complex drives branch migration. In the full resolvosome a probable DNA-RuvA(4)-RuvB(12)-RuvC(2) complex forms which resolves the HJ.

The protein resides in the cytoplasm. Its function is as follows. The RuvA-RuvB-RuvC complex processes Holliday junction (HJ) DNA during genetic recombination and DNA repair, while the RuvA-RuvB complex plays an important role in the rescue of blocked DNA replication forks via replication fork reversal (RFR). RuvA specifically binds to HJ cruciform DNA, conferring on it an open structure. The RuvB hexamer acts as an ATP-dependent pump, pulling dsDNA into and through the RuvAB complex. HJ branch migration allows RuvC to scan DNA until it finds its consensus sequence, where it cleaves and resolves the cruciform DNA. The sequence is that of Holliday junction branch migration complex subunit RuvA from Metamycoplasma arthritidis (strain 158L3-1) (Mycoplasma arthritidis).